The chain runs to 429 residues: Enolase (429 aa).

Gln163 provides a ligand contact to (2R)-2-phosphoglycerate. The active-site Proton donor is the Glu205. Mg(2+) contacts are provided by Asp242, Glu285, and Asp312. (2R)-2-phosphoglycerate contacts are provided by Lys337, Arg366, Ser367, and Lys388. Lys337 (proton acceptor) is an active-site residue.

This sequence belongs to the enolase family. As to quaternary structure, component of the RNA degradosome, a multiprotein complex involved in RNA processing and mRNA degradation. It depends on Mg(2+) as a cofactor.

The protein resides in the cytoplasm. It is found in the secreted. The protein localises to the cell surface. It carries out the reaction (2R)-2-phosphoglycerate = phosphoenolpyruvate + H2O. It participates in carbohydrate degradation; glycolysis; pyruvate from D-glyceraldehyde 3-phosphate: step 4/5. In terms of biological role, catalyzes the reversible conversion of 2-phosphoglycerate (2-PG) into phosphoenolpyruvate (PEP). It is essential for the degradation of carbohydrates via glycolysis. In Alkalilimnicola ehrlichii (strain ATCC BAA-1101 / DSM 17681 / MLHE-1), this protein is Enolase.